A 120-amino-acid polypeptide reads, in one-letter code: Large ribosomal subunit protein bL19c (120 aa).

The protein belongs to the bacterial ribosomal protein bL19 family.

It localises to the plastid. The protein localises to the chloroplast. This Phaeodactylum tricornutum (strain CCAP 1055/1) protein is Large ribosomal subunit protein bL19c.